Consider the following 131-residue polypeptide: Hypocretin neuropeptide precursor (131 aa).

A signal peptide spans 1 to 33 (MNPPFAKVSWATVTLLLLLLLLPPAVLSPGAAA). Residue Q34 is modified to Pyrrolidone carboxylic acid. Intrachain disulfides connect C39–C45 and C40–C47. L66 carries the leucine amide modification. M97 is subject to Methionine amide. Residues 98–131 (GRRAGAEPAPRLCPGRRCLAAAASSVAPGGRSGI) constitute a propeptide, removed in mature form.

This sequence belongs to the orexin family. In terms of processing, specific enzymatic cleavages at paired basic residues yield the different active peptides.

The protein resides in the rough endoplasmic reticulum. It is found in the cytoplasmic vesicle. The protein localises to the synapse. Its function is as follows. Neuropeptides that play a significant role in the regulation of food intake and sleep-wakefulness, possibly by coordinating the complex behavioral and physiologic responses of these complementary homeostatic functions. A broader role in the homeostatic regulation of energy metabolism, autonomic function, hormonal balance and the regulation of body fluids, is also suggested. Functionally, binds to orexin receptors HCRTR1/OX1R and HCRTR2/OX2R with a high affinity. Stimulates food intake. Modulates pituitary luteinizing hormone secretion in an ovarian steroid-dependent manner. Binds to orexin receptor HCRTR2/OX2R only. Stimulates food intake. Modulates pituitary luteinizing hormone secretion in an ovarian steroid-dependent manner. The polypeptide is Hypocretin neuropeptide precursor (HCRT) (Sus scrofa (Pig)).